The chain runs to 241 residues: MEGWQRAFVLHGRPYSETSLMLDLFTEGEGRMRVLAKGARGRRSNLKGCLQPFTPLLVRWTGRGEVKTLRSAEPVSLALPLTGSMLYSGLYVNELLSRVLEHQTNYSALFFDYLHCLQSLAGSDGSPEYALRQFELAILAHLGYGVDFLHCAGSGQPVSDTMTYRYREEKGFIASLVVDHYSFTGRQLLALANREFPDADTLRAAKRFTRIALKPYLGGKPLKSRELFRQFVIKPPSEPLP.

Belongs to the RecO family.

In terms of biological role, involved in DNA repair and RecF pathway recombination. In Yersinia enterocolitica serotype O:8 / biotype 1B (strain NCTC 13174 / 8081), this protein is DNA repair protein RecO.